Here is a 248-residue protein sequence, read N- to C-terminus: UPF0736 protein BCAH187_A1335 (248 aa).

Belongs to the UPF0736 family.

The sequence is that of UPF0736 protein BCAH187_A1335 from Bacillus cereus (strain AH187).